A 485-amino-acid polypeptide reads, in one-letter code: Rhamnulokinase (485 aa).

8-12 (ASSGR) contacts ATP. Residues glycine 78 and 231 to 233 (HDT) each bind substrate. Aspartate 232 (proton acceptor) is an active-site residue. An ATP-binding site is contributed by threonine 254. Asparagine 291 lines the substrate pocket. Glutamine 299 provides a ligand contact to ATP. Cysteine 348 and cysteine 365 are disulfide-bonded. Glycine 397 is a binding site for ATP. Cysteines 408 and 412 form a disulfide.

It belongs to the rhamnulokinase family. The cofactor is Mg(2+).

The catalysed reaction is L-rhamnulose + ATP = L-rhamnulose 1-phosphate + ADP + H(+). Its pathway is carbohydrate degradation; L-rhamnose degradation; glycerone phosphate from L-rhamnose: step 2/3. Functionally, involved in the catabolism of L-rhamnose (6-deoxy-L-mannose). Catalyzes the transfer of the gamma-phosphate group from ATP to the 1-hydroxyl group of L-rhamnulose to yield L-rhamnulose 1-phosphate. The polypeptide is Rhamnulokinase (Yersinia pestis bv. Antiqua (strain Antiqua)).